The sequence spans 310 residues: Oxygen-dependent coproporphyrinogen-III oxidase (310 aa).

Ser92 is a binding site for substrate. A divalent metal cation contacts are provided by His96 and His106. The active-site Proton donor is the His106. 108–110 (NVR) provides a ligand contact to substrate. A divalent metal cation contacts are provided by His145 and His175. An important for dimerization region spans residues 240–275 (YVEFNLIWDRGTLFGLQSGGRTESILMSMPPLARWE). 258–260 (GGR) is a substrate binding site.

This sequence belongs to the aerobic coproporphyrinogen-III oxidase family. Homodimer. The cofactor is a divalent metal cation.

It localises to the cytoplasm. It carries out the reaction coproporphyrinogen III + O2 + 2 H(+) = protoporphyrinogen IX + 2 CO2 + 2 H2O. The protein operates within porphyrin-containing compound metabolism; protoporphyrin-IX biosynthesis; protoporphyrinogen-IX from coproporphyrinogen-III (O2 route): step 1/1. Its function is as follows. Involved in the heme biosynthesis. Catalyzes the aerobic oxidative decarboxylation of propionate groups of rings A and B of coproporphyrinogen-III to yield the vinyl groups in protoporphyrinogen-IX. The polypeptide is Oxygen-dependent coproporphyrinogen-III oxidase (Pectobacterium atrosepticum (strain SCRI 1043 / ATCC BAA-672) (Erwinia carotovora subsp. atroseptica)).